The primary structure comprises 341 residues: BZIP domain-containing transcription factor BZP4 (341 aa).

Composition is skewed to polar residues over residues 1–32, 61–76, 128–139, and 150–163; these read MESS…PTNE, LTES…SHSL, PLTSHSRSQITH, and YSSS…SPVS. Disordered stretches follow at residues 1–95 and 118–254; these read MESS…PHGM and TNHS…DKKQ. The segment covering 178–192 has biased composition (low complexity); that stretch reads SPSSSSFPSSIPRTP. Basic and acidic residues-rich tracts occupy residues 225–234 and 242–254; these read TGDRKHEKDS and EEYK…DKKQ. The interval 250–269 is basic motif; sequence KDKKQVRNRIGARRFRAKRK. Residues 250-308 enclose the bZIP domain; the sequence is KDKKQVRNRIGARRFRAKRKDYVNQLEAGIRLRDDEITNLQSQLESQRNEINELRLQLK. Residues 279–307 are leucine-zipper; the sequence is IRLRDDEITNLQSQLESQRNEINELRLQL.

Belongs to the bZIP family.

It localises to the nucleus. It is found in the cytoplasm. Transcription factor that promotes the production of melanin, a pigment that serves as antioxidant, reactive oxygen species (ROS) scavenger and that protect fungal pathogens from radiation and host immune responses. This is BZIP domain-containing transcription factor BZP4 from Cryptococcus neoformans var. grubii serotype A (strain H99 / ATCC 208821 / CBS 10515 / FGSC 9487) (Filobasidiella neoformans var. grubii).